A 493-amino-acid polypeptide reads, in one-letter code: Probable malate:quinone oxidoreductase (493 aa).

The protein belongs to the MQO family. It depends on FAD as a cofactor.

It carries out the reaction (S)-malate + a quinone = a quinol + oxaloacetate. It functions in the pathway carbohydrate metabolism; tricarboxylic acid cycle; oxaloacetate from (S)-malate (quinone route): step 1/1. This Lysinibacillus sphaericus (strain C3-41) protein is Probable malate:quinone oxidoreductase.